A 945-amino-acid chain; its full sequence is Kinesin-like protein KIN-7F (945 aa).

Residues 34 to 356 (RILVSVRLRP…LLFASCAKEV (323 aa)) form the Kinesin motor domain. 120–127 (GQTSSGKT) provides a ligand contact to ATP. Positions 365-437 (VMSDKALVKQ…QDLLQVVGDN (73 aa)) form a coiled coil. 2 disordered regions span residues 484–512 (RRVAQREHKPQQAENNVQFTTPSRYSVSS) and 553–588 (NECLESSAVGSNSLQDPNAGSSMHINNDSNSSMNSR). 2 stretches are compositionally biased toward polar residues: residues 495-512 (QAENNVQFTTPSRYSVSS) and 560-587 (AVGSNSLQDPNAGSSMHINNDSNSSMNS).

It belongs to the TRAFAC class myosin-kinesin ATPase superfamily. Kinesin family. KIN-7 subfamily. In terms of assembly, binds microtubules.

In terms of biological role, binds ATP/ADP in vitro. Possesses low ATPase activity but high affinity for microtubules. This is Kinesin-like protein KIN-7F from Oryza sativa subsp. japonica (Rice).